A 204-amino-acid polypeptide reads, in one-letter code: Tetraspanin-13 (204 aa).

The Cytoplasmic portion of the chain corresponds to 1–19; the sequence is MVCGGFSCSKNCLCALNLL. Residues 20–40 traverse the membrane as a helical segment; the sequence is YTLVSLLLIGIAAWGIGFGLI. Topologically, residues 41 to 44 are extracellular; that stretch reads SSLR. A helical transmembrane segment spans residues 45–65; sequence VVGVVIAVGIFLFLIALVGLI. At 66 to 72 the chain is on the cytoplasmic side; it reads GAVKHHQ. The chain crosses the membrane as a helical span at residues 73–93; the sequence is VLLFFYMIILLLVFIVQFSVS. Over 94-167 the chain is Extracellular; sequence CACLALNREQ…IGEYAGEVLR (74 aa). N-linked (GlcNAc...) asparagine glycosylation is found at Asn-113 and Asn-137. Ser-143 carries the phosphoserine modification. Residues 168–188 form a helical membrane-spanning segment; that stretch reads FVGGIGLFFSFTEILGVWLTY. Over 189 to 204 the chain is Cytoplasmic; that stretch reads RYRNQKDPRANPSAFL.

This sequence belongs to the tetraspanin (TM4SF) family.

Its subcellular location is the membrane. In Mus musculus (Mouse), this protein is Tetraspanin-13 (Tspan13).